The chain runs to 131 residues: Large ribosomal subunit protein mL60 (131 aa).

A mitochondrion-targeting transit peptide spans 1–12 (MFGPFKLTSPVA).

The protein belongs to the mitochondrion-specific ribosomal protein mL60 family. In terms of assembly, component of the mitochondrial large ribosomal subunit (mt-LSU). Mature yeast 74S mitochondrial ribosomes consist of a small (37S) and a large (54S) subunit. The 37S small subunit contains a 15S ribosomal RNA (15S mt-rRNA) and 34 different proteins. The 54S large subunit contains a 21S rRNA (21S mt-rRNA) and 46 different proteins.

The protein localises to the mitochondrion. Its function is as follows. Component of the mitochondrial ribosome (mitoribosome), a dedicated translation machinery responsible for the synthesis of mitochondrial genome-encoded proteins, including at least some of the essential transmembrane subunits of the mitochondrial respiratory chain. The mitoribosomes are attached to the mitochondrial inner membrane and translation products are cotranslationally integrated into the membrane. This Saccharomyces cerevisiae (strain ATCC 204508 / S288c) (Baker's yeast) protein is Large ribosomal subunit protein mL60 (MRPL31).